The primary structure comprises 69 residues: UPF0337 protein XAC4007 (69 aa).

It belongs to the UPF0337 (CsbD) family.

This Xanthomonas axonopodis pv. citri (strain 306) protein is UPF0337 protein XAC4007.